We begin with the raw amino-acid sequence, 206 residues long: Protein GrpE (206 aa).

This sequence belongs to the GrpE family. As to quaternary structure, homodimer.

It is found in the cytoplasm. Participates actively in the response to hyperosmotic and heat shock by preventing the aggregation of stress-denatured proteins, in association with DnaK and GrpE. It is the nucleotide exchange factor for DnaK and may function as a thermosensor. Unfolded proteins bind initially to DnaJ; upon interaction with the DnaJ-bound protein, DnaK hydrolyzes its bound ATP, resulting in the formation of a stable complex. GrpE releases ADP from DnaK; ATP binding to DnaK triggers the release of the substrate protein, thus completing the reaction cycle. Several rounds of ATP-dependent interactions between DnaJ, DnaK and GrpE are required for fully efficient folding. This chain is Protein GrpE, found in Shewanella sp. (strain W3-18-1).